The following is a 243-amino-acid chain: Vesicle-associated membrane protein-associated protein B/C (243 aa).

At alanine 2 the chain carries N-acetylalanine. Residues alanine 2 to threonine 222 lie on the Cytoplasmic side of the membrane. Residues valine 7–glutamate 124 form the MSP domain. A Phosphoserine modification is found at serine 146. Lysine 147 participates in a covalent cross-link: Glycyl lysine isopeptide (Lys-Gly) (interchain with G-Cter in SUMO1). The residue at position 150 (threonine 150) is a Phosphothreonine. Phosphoserine occurs at positions 156, 158, 159, 160, and 206. Residues serine 159–leucine 196 adopt a coiled-coil conformation. A helical; Anchor for type IV membrane protein membrane pass occupies residues arginine 223–leucine 243.

This sequence belongs to the VAMP-associated protein (VAP) (TC 9.B.17) family. In terms of assembly, homodimer, and heterodimer with VAPA. Interacts with VAMP1 and VAMP2. Interacts (via MSP domain) with ZFYVE27. Interacts with RMDN3. Interacts with KIF5A in a ZFYVE27-dependent manner. Interacts (via MSP domain) with STARD3 (via phospho-FFAT motif). Interacts with STARD3NL (via FFAT motif). Interacts with CERT1. Interacts with PLEKHA3 and SACM1L to form a ternary complex. Interacts with VPS13A (via FFAT motif). Interacts with RB1CC1 (via phosphorylated FFAT motif), MIGA2 (via phosphorylated FFAT motif), RMDN3 (via phosphorylated FFAT motif), OSBPL1A (via FFAT motif), KCNB1 (via phosphorylated FFAT motif) and KCNB2 (via phosphorylated FFAT motif). Interacts (via MSP domain) with WDR44 (via FFAT motif); the interactions connect the endoplasmic reticulum (ER) with the endosomal tubule. (Microbial infection) Interacts (via MSP domain) with hepatitis C virus (HCV) non-structural protein 5A (via disordered domain D3). Interacts with HCV RNA-directed RNA polymerase. Ubiquitous. Isoform 1 predominates.

Its subcellular location is the endoplasmic reticulum membrane. Functionally, endoplasmic reticulum (ER)-anchored protein that mediates the formation of contact sites between the ER and endosomes via interaction with FFAT motif-containing proteins such as STARD3 or WDR44. Interacts with STARD3 in a FFAT motif phosphorylation dependent manner. Via interaction with WDR44 participates in neosynthesized protein export. Participates in the endoplasmic reticulum unfolded protein response (UPR) by inducing ERN1/IRE1 activity. Involved in cellular calcium homeostasis regulation. In Homo sapiens (Human), this protein is Vesicle-associated membrane protein-associated protein B/C.